Consider the following 228-residue polypeptide: 2-C-methyl-D-erythritol 4-phosphate cytidylyltransferase (228 aa).

The protein belongs to the IspD/TarI cytidylyltransferase family. IspD subfamily.

The catalysed reaction is 2-C-methyl-D-erythritol 4-phosphate + CTP + H(+) = 4-CDP-2-C-methyl-D-erythritol + diphosphate. Its pathway is isoprenoid biosynthesis; isopentenyl diphosphate biosynthesis via DXP pathway; isopentenyl diphosphate from 1-deoxy-D-xylulose 5-phosphate: step 2/6. Functionally, catalyzes the formation of 4-diphosphocytidyl-2-C-methyl-D-erythritol from CTP and 2-C-methyl-D-erythritol 4-phosphate (MEP). The polypeptide is 2-C-methyl-D-erythritol 4-phosphate cytidylyltransferase (Crocosphaera subtropica (strain ATCC 51142 / BH68) (Cyanothece sp. (strain ATCC 51142))).